The chain runs to 377 residues: Nitric oxide reductase FlRd-NAD(+) reductase (377 aa).

Belongs to the FAD-dependent oxidoreductase family. FAD serves as cofactor.

Its subcellular location is the cytoplasm. The enzyme catalyses 2 reduced [nitric oxide reductase rubredoxin domain] + NAD(+) + H(+) = 2 oxidized [nitric oxide reductase rubredoxin domain] + NADH. It participates in nitrogen metabolism; nitric oxide reduction. Its function is as follows. One of at least two accessory proteins for anaerobic nitric oxide (NO) reductase. Reduces the rubredoxin moiety of NO reductase. In Enterobacter sp. (strain 638), this protein is Nitric oxide reductase FlRd-NAD(+) reductase.